The chain runs to 101 residues: NADH-quinone oxidoreductase subunit K (101 aa).

The next 3 membrane-spanning stretches (helical) occupy residues 4-24, 30-50, and 61-81; these read LSHYLVLGALLFAIGVVGIFL, IILLMSIELMLLAVNMNFVAF, and IFVFFILTVAAAEAAIGLAIL.

This sequence belongs to the complex I subunit 4L family. NDH-1 is composed of 14 different subunits. Subunits NuoA, H, J, K, L, M, N constitute the membrane sector of the complex.

It is found in the cell inner membrane. It carries out the reaction a quinone + NADH + 5 H(+)(in) = a quinol + NAD(+) + 4 H(+)(out). NDH-1 shuttles electrons from NADH, via FMN and iron-sulfur (Fe-S) centers, to quinones in the respiratory chain. The immediate electron acceptor for the enzyme in this species is believed to be ubiquinone. Couples the redox reaction to proton translocation (for every two electrons transferred, four hydrogen ions are translocated across the cytoplasmic membrane), and thus conserves the redox energy in a proton gradient. The polypeptide is NADH-quinone oxidoreductase subunit K (Nitrosomonas europaea (strain ATCC 19718 / CIP 103999 / KCTC 2705 / NBRC 14298)).